The following is a 622-amino-acid chain: MQSSKSSLAALTLGAIGVVYGDIGTSVLYAVKEVFGSGHVPFTQSNVYGILSIFFWTLTVIVSLKYVVLVLRADNHGEGGLVAMLALASQAVKDKPRLRSALLAVGIFGTSLFYGDGVITPAISVLSAIEGLEVVSPHFKKYVIPITLVVLFCLFAVQKRGTGGIGRFFGPITLVWFASIALLGLAHILGHPEILWALSPHHALGFMFANPGTSFIILGAVVLCVTGAEALYADLGHFGKRPIRLAWFGVAMPALTLNYFGQGALLLAEPGAVRNPFYMMAPDWALIPLVVLATMATVIASQALITGAFSVTKQVIQLGYLPRLGIQHTSVRDTGQIYMPLVNWGLFVAIVLAVVMFRSSSNLAAAYGIAVTLDMLITTTLTFFVIRYGWGYPLALCVAATGCFAVVDLAFFASNLLKLFQGGWFPLMIGGIVFALMMTWKEGRRLLNVKLRADALDLKDFLASVFTNPPTRVEGTAVFLTAGTGAVPNALLHNLKHNKVLHQQNLFVTVHNHETPWIGLDRRLQIESLGHDCWQVVIHYGFKNDLDLPRALALLRGRGCDIEPMSTSYFLSRDTVIPTIGSGMAPWREKLFAQMHHNASGAADFLHLPSNAVVELGSKIEI.

Transmembrane regions (helical) follow at residues 8 to 28, 50 to 70, 103 to 123, 137 to 157, 168 to 188, 203 to 223, 247 to 267, 285 to 305, 337 to 357, 366 to 386, 393 to 413, and 419 to 439; these read LAAL…TSVL, ILSI…VVLV, LAVG…TPAI, PHFK…LFAV, FFGP…LAHI, ALGF…AVVL, WFGV…ALLL, ALIP…QALI, IYMP…VVMF, AYGI…FFVI, PLAL…AFFA, and LFQG…LMMT.

This sequence belongs to the HAK/KUP transporter (TC 2.A.72) family.

It localises to the cell inner membrane. The enzyme catalyses K(+)(in) + H(+)(in) = K(+)(out) + H(+)(out). Its function is as follows. Transport of potassium into the cell. Likely operates as a K(+):H(+) symporter. The polypeptide is Probable potassium transport system protein Kup (Verminephrobacter eiseniae (strain EF01-2)).